The chain runs to 496 residues: Apolipoprotein N-acyltransferase (496 aa).

The next 6 helical transmembrane spans lie at 6-26 (IICLLLGILSGLVFAPIFFIP), 50-70 (FGYLFGFGHFLSGMYWISIGV), 77-97 (FWWAIPFALFGLPIILAFFIS), 114-134 (LIFCLLWVLFEWIRSWILTGL), 148-168 (ILIQPLSITGIYGLSFIVIYI), and 183-203 (LKILLASSMLILTVMVIYGAV). The 245-residue stretch at 220–464 (VQPSIPQTAK…QGLIPQKLTT (245 aa)) folds into the CN hydrolase domain. E259 serves as the catalytic Proton acceptor. K322 is a catalytic residue. C372 serves as the catalytic Nucleophile. A helical transmembrane segment spans residues 474–494 (FAMLLSIVFIILIHYLLSLIF).

The protein belongs to the CN hydrolase family. Apolipoprotein N-acyltransferase subfamily.

Its subcellular location is the cell inner membrane. It catalyses the reaction N-terminal S-1,2-diacyl-sn-glyceryl-L-cysteinyl-[lipoprotein] + a glycerophospholipid = N-acyl-S-1,2-diacyl-sn-glyceryl-L-cysteinyl-[lipoprotein] + a 2-acyl-sn-glycero-3-phospholipid + H(+). It functions in the pathway protein modification; lipoprotein biosynthesis (N-acyl transfer). Catalyzes the phospholipid dependent N-acylation of the N-terminal cysteine of apolipoprotein, the last step in lipoprotein maturation. This chain is Apolipoprotein N-acyltransferase, found in Rickettsia prowazekii (strain Madrid E).